The primary structure comprises 246 residues: uncharacterized protein (246 aa).

This is an uncharacterized protein from Borreliella burgdorferi (strain ATCC 35210 / DSM 4680 / CIP 102532 / B31) (Borrelia burgdorferi).